Reading from the N-terminus, the 317-residue chain is Glycine--tRNA ligase alpha subunit (317 aa).

It belongs to the class-II aminoacyl-tRNA synthetase family. As to quaternary structure, tetramer of two alpha and two beta subunits.

Its subcellular location is the cytoplasm. The enzyme catalyses tRNA(Gly) + glycine + ATP = glycyl-tRNA(Gly) + AMP + diphosphate. The sequence is that of Glycine--tRNA ligase alpha subunit from Leptothrix cholodnii (strain ATCC 51168 / LMG 8142 / SP-6) (Leptothrix discophora (strain SP-6)).